A 161-amino-acid chain; its full sequence is Cyclic pyranopterin monophosphate synthase (161 aa).

Residues 76–78 (MCH) and 114–115 (ME) contribute to the substrate site. The active site involves Asp-129.

It belongs to the MoaC family. As to quaternary structure, homohexamer; trimer of dimers.

It carries out the reaction (8S)-3',8-cyclo-7,8-dihydroguanosine 5'-triphosphate = cyclic pyranopterin phosphate + diphosphate. The protein operates within cofactor biosynthesis; molybdopterin biosynthesis. Its function is as follows. Catalyzes the conversion of (8S)-3',8-cyclo-7,8-dihydroguanosine 5'-triphosphate to cyclic pyranopterin monophosphate (cPMP). The polypeptide is Cyclic pyranopterin monophosphate synthase (Clostridium acetobutylicum (strain ATCC 824 / DSM 792 / JCM 1419 / IAM 19013 / LMG 5710 / NBRC 13948 / NRRL B-527 / VKM B-1787 / 2291 / W)).